A 491-amino-acid polypeptide reads, in one-letter code: UDP-N-acetylmuramate--L-alanine ligase (491 aa).

126–132 provides a ligand contact to ATP; that stretch reads GTHGKTT.

It belongs to the MurCDEF family.

Its subcellular location is the cytoplasm. It catalyses the reaction UDP-N-acetyl-alpha-D-muramate + L-alanine + ATP = UDP-N-acetyl-alpha-D-muramoyl-L-alanine + ADP + phosphate + H(+). It participates in cell wall biogenesis; peptidoglycan biosynthesis. In terms of biological role, cell wall formation. In Yersinia enterocolitica serotype O:8 / biotype 1B (strain NCTC 13174 / 8081), this protein is UDP-N-acetylmuramate--L-alanine ligase.